Reading from the N-terminus, the 427-residue chain is NADH-quinone oxidoreductase subunit 14 (427 aa).

14 helical membrane-spanning segments follow: residues 1-21, 30-50, 57-77, 79-99, 104-124, 137-157, 172-192, 204-224, 230-250, 257-277, 280-300, 322-342, 360-380, and 400-420; these read MTLA…FVLP, LLGL…PFAF, GVSQ…VGLV, SGRF…HLLA, LLLM…LATW, FLLG…FYGA, YALA…LAPF, PTPV…AALL, PEAL…AALA, LLAY…YTGN, ALGF…AVLS, LGLA…LAGF, VLVL…GLGL, and AAVV…GLVL.

Belongs to the complex I subunit 2 family. NDH-1 is composed of 15 different subunits, Nqo1 to Nqo15. The complex has a L-shaped structure, with the hydrophobic arm (subunits Nqo7, Nqo8 and Nqo10 to Nqo14) embedded in the membrane and the hydrophilic peripheral arm (subunits Nqo1 to Nqo6, Nqo9 and Nqo15) protruding into the bacterial cytoplasm. The hydrophilic domain contains all the redox centers.

It is found in the cell inner membrane. The enzyme catalyses a quinone + NADH + 5 H(+)(in) = a quinol + NAD(+) + 4 H(+)(out). NDH-1 shuttles electrons from NADH, via FMN and iron-sulfur (Fe-S) centers, to quinones in the respiratory chain. The immediate electron acceptor for the enzyme in this species is menaquinone. Couples the redox reaction to proton translocation (for every two electrons transferred, four hydrogen ions are translocated across the cytoplasmic membrane), and thus conserves the redox energy in a proton gradient required for the synthesis of ATP. This chain is NADH-quinone oxidoreductase subunit 14 (nqo14), found in Thermus thermophilus (strain ATCC 27634 / DSM 579 / HB8).